Here is a 357-residue protein sequence, read N- to C-terminus: Uroporphyrinogen decarboxylase (357 aa).

Substrate-binding positions include 27–31, aspartate 77, tyrosine 154, threonine 209, and histidine 327; that span reads RQAGR.

Belongs to the uroporphyrinogen decarboxylase family. In terms of assembly, homodimer.

It is found in the cytoplasm. The catalysed reaction is uroporphyrinogen III + 4 H(+) = coproporphyrinogen III + 4 CO2. Its pathway is porphyrin-containing compound metabolism; protoporphyrin-IX biosynthesis; coproporphyrinogen-III from 5-aminolevulinate: step 4/4. Functionally, catalyzes the decarboxylation of four acetate groups of uroporphyrinogen-III to yield coproporphyrinogen-III. This chain is Uroporphyrinogen decarboxylase, found in Proteus mirabilis (strain HI4320).